Consider the following 256-residue polypeptide: Thiazole synthase (256 aa).

Lysine 96 (schiff-base intermediate with DXP) is an active-site residue. 1-deoxy-D-xylulose 5-phosphate-binding positions include glycine 157, 184-185 (AG), and 206-207 (NT).

The protein belongs to the ThiG family. Homotetramer. Forms heterodimers with either ThiH or ThiS.

Its subcellular location is the cytoplasm. It catalyses the reaction [ThiS sulfur-carrier protein]-C-terminal-Gly-aminoethanethioate + 2-iminoacetate + 1-deoxy-D-xylulose 5-phosphate = [ThiS sulfur-carrier protein]-C-terminal Gly-Gly + 2-[(2R,5Z)-2-carboxy-4-methylthiazol-5(2H)-ylidene]ethyl phosphate + 2 H2O + H(+). It participates in cofactor biosynthesis; thiamine diphosphate biosynthesis. Functionally, catalyzes the rearrangement of 1-deoxy-D-xylulose 5-phosphate (DXP) to produce the thiazole phosphate moiety of thiamine. Sulfur is provided by the thiocarboxylate moiety of the carrier protein ThiS. In vitro, sulfur can be provided by H(2)S. This is Thiazole synthase from Bartonella tribocorum (strain CIP 105476 / IBS 506).